Here is a 917-residue protein sequence, read N- to C-terminus: Spermatogenesis-associated protein 31D4 (917 aa).

Residues 29-49 form a helical membrane-spanning segment; that stretch reads FICLSGLGLFILYLFYMVLTL. Disordered regions lie at residues 55–80, 152–195, and 773–798; these read EKNNDTQKHQGRARRKRKSVTFKDRK, SVSP…PPPL, and SQETAPKNHLLHDPETSSDEDLRSNS. Over residues 63 to 74 the composition is skewed to basic residues; sequence HQGRARRKRKSV. Positions 152–163 are enriched in low complexity; that stretch reads SVSPLASSASGA. Polar residues predominate over residues 164 to 177; that stretch reads ESSFTLASTPSATT. Basic and acidic residues predominate over residues 782-798; the sequence is LLHDPETSSDEDLRSNS.

Belongs to the SPATA31 family.

The protein localises to the membrane. In terms of biological role, may play a role in spermatogenesis. This Homo sapiens (Human) protein is Spermatogenesis-associated protein 31D4 (SPATA31D4).